A 100-amino-acid polypeptide reads, in one-letter code: Aspartyl/glutamyl-tRNA(Asn/Gln) amidotransferase subunit C (100 aa).

This sequence belongs to the GatC family. As to quaternary structure, heterotrimer of A, B and C subunits.

It catalyses the reaction L-glutamyl-tRNA(Gln) + L-glutamine + ATP + H2O = L-glutaminyl-tRNA(Gln) + L-glutamate + ADP + phosphate + H(+). The catalysed reaction is L-aspartyl-tRNA(Asn) + L-glutamine + ATP + H2O = L-asparaginyl-tRNA(Asn) + L-glutamate + ADP + phosphate + 2 H(+). Its function is as follows. Allows the formation of correctly charged Asn-tRNA(Asn) or Gln-tRNA(Gln) through the transamidation of misacylated Asp-tRNA(Asn) or Glu-tRNA(Gln) in organisms which lack either or both of asparaginyl-tRNA or glutaminyl-tRNA synthetases. The reaction takes place in the presence of glutamine and ATP through an activated phospho-Asp-tRNA(Asn) or phospho-Glu-tRNA(Gln). This chain is Aspartyl/glutamyl-tRNA(Asn/Gln) amidotransferase subunit C, found in Streptococcus pneumoniae (strain P1031).